Consider the following 257-residue polypeptide: Probable amino-acid ABC transporter ATP-binding protein HI_1078 (257 aa).

The 241-residue stretch at 4–244 (LKVSNIQKNF…PQHERTKQFL (241 aa)) folds into the ABC transporter domain. An ATP-binding site is contributed by 36 to 43 (GPSGSGKT).

It belongs to the ABC transporter superfamily.

Its subcellular location is the cell inner membrane. In terms of biological role, probably part of a binding-protein-dependent transport system for an amino acid. Probably responsible for energy coupling to the transport system. The chain is Probable amino-acid ABC transporter ATP-binding protein HI_1078 from Haemophilus influenzae (strain ATCC 51907 / DSM 11121 / KW20 / Rd).